Reading from the N-terminus, the 151-residue chain is UPF0208 membrane protein YfbV (151 aa).

Helical transmembrane passes span 46 to 65 (YAIR…QIAL) and 69 to 91 (LGPA…WWLG).

It belongs to the UPF0208 family.

It localises to the cell inner membrane. This Escherichia coli O1:K1 / APEC protein is UPF0208 membrane protein YfbV.